The primary structure comprises 539 residues: Interleukin-2 receptor subunit beta (539 aa).

The N-terminal stretch at 1-26 is a signal peptide; that stretch reads MATIALPWSLSLYVFLLLLATPWASA. Over 27-240 the chain is Extracellular; the sequence is AVKNCSHLEC…RTRPADPMKE (214 aa). N-linked (GlcNAc...) asparagine glycans are attached at residues N30, N43, N55, and N71. Cysteines 36 and 46 form a disulfide. C74 and C86 are disulfide-bonded. The 101-residue stretch at 135-235 folds into the Fibronectin type-III domain; the sequence is APHSLQVLHI…QPLTFRTRPA (101 aa). 2 N-linked (GlcNAc...) asparagine glycosylation sites follow: N150 and N216. Residues 221-225 carry the WSXWS motif motif; the sequence is WSPWS. Residues 241-268 form a helical membrane-spanning segment; the sequence is ILPMSWLRYLLLVLGCFSGFFSCVYILV. Residues 269–539 are Cytoplasmic-facing; it reads KCRYLGPWLK…LQAQDSVHLI (271 aa). The Box 1 motif motif lies at 281–289; it reads LKCHIPDPS. Disordered regions lie at residues 395 to 419, 440 to 465, and 477 to 516; these read VEED…GEQD, PNTA…LPSL, and LERM…QGPI.

Belongs to the type I cytokine receptor family. Type 4 subfamily. In terms of assembly, non-covalent dimer of an alpha and a beta subunit. IL2R exists in 3 different forms: a high affinity dimer, an intermediate affinity monomer (beta subunit), and a low affinity monomer (alpha subunit). The high and intermediate affinity forms also associate with a gamma subunit. Interacts with SHB upon interleukin stimulation.

It localises to the cell membrane. Its subcellular location is the cell surface. Its function is as follows. Receptor for interleukin-2. This beta subunit is involved in receptor mediated endocytosis and transduces the mitogenic signals of IL2. Probably in association with IL15RA, involved in the stimulation of neutrophil phagocytosis by IL15. The chain is Interleukin-2 receptor subunit beta (Il2rb) from Mus musculus (Mouse).